The sequence spans 503 residues: Phenylalanine--tRNA ligase alpha subunit (503 aa).

At Ser-2 the chain carries N-acetylserine. The contains the major tRNA-Phe binding sites stretch occupies residues 2 to 173; the sequence is SDFQLEILKK…KRKLIAQGKI (172 aa). L-phenylalanine-binding positions include Thr-333, 374 to 376, and Tyr-414; that span reads QVE. Residue Glu-416 participates in Mg(2+) binding. Residue Phe-440 coordinates L-phenylalanine.

The protein belongs to the class-II aminoacyl-tRNA synthetase family. Phe-tRNA synthetase alpha subunit type 2 subfamily. As to quaternary structure, tetramer of two alpha and two beta subunits. Mg(2+) is required as a cofactor.

Its subcellular location is the cytoplasm. It carries out the reaction tRNA(Phe) + L-phenylalanine + ATP = L-phenylalanyl-tRNA(Phe) + AMP + diphosphate + H(+). The protein is Phenylalanine--tRNA ligase alpha subunit (FRS2) of Saccharomyces cerevisiae (strain ATCC 204508 / S288c) (Baker's yeast).